Reading from the N-terminus, the 404-residue chain is Tryptophan synthase beta chain (404 aa).

The residue at position 94 (Lys-94) is an N6-(pyridoxal phosphate)lysine.

It belongs to the TrpB family. Tetramer of two alpha and two beta chains. Pyridoxal 5'-phosphate is required as a cofactor.

The enzyme catalyses (1S,2R)-1-C-(indol-3-yl)glycerol 3-phosphate + L-serine = D-glyceraldehyde 3-phosphate + L-tryptophan + H2O. It functions in the pathway amino-acid biosynthesis; L-tryptophan biosynthesis; L-tryptophan from chorismate: step 5/5. The beta subunit is responsible for the synthesis of L-tryptophan from indole and L-serine. The chain is Tryptophan synthase beta chain from Staphylococcus aureus (strain bovine RF122 / ET3-1).